A 729-amino-acid chain; its full sequence is Phosphoribosylformylglycinamidine synthase subunit PurL (729 aa).

The active site involves His-54. ATP-binding residues include Tyr-57 and Lys-96. Glu-98 contacts Mg(2+). Substrate-binding positions include Ser-99 to His-102 and Arg-121. The active-site Proton acceptor is the His-100. Asp-122 is a Mg(2+) binding site. A substrate-binding site is contributed by Gln-245. Asp-273 is a Mg(2+) binding site. Position 317–319 (Glu-317–Gln-319) interacts with substrate. Asp-495 and Gly-532 together coordinate ATP. A Mg(2+)-binding site is contributed by Asn-533. Ser-535 is a binding site for substrate.

Belongs to the FGAMS family. As to quaternary structure, monomer. Part of the FGAM synthase complex composed of 1 PurL, 1 PurQ and 2 PurS subunits.

Its subcellular location is the cytoplasm. It carries out the reaction N(2)-formyl-N(1)-(5-phospho-beta-D-ribosyl)glycinamide + L-glutamine + ATP + H2O = 2-formamido-N(1)-(5-O-phospho-beta-D-ribosyl)acetamidine + L-glutamate + ADP + phosphate + H(+). It participates in purine metabolism; IMP biosynthesis via de novo pathway; 5-amino-1-(5-phospho-D-ribosyl)imidazole from N(2)-formyl-N(1)-(5-phospho-D-ribosyl)glycinamide: step 1/2. In terms of biological role, part of the phosphoribosylformylglycinamidine synthase complex involved in the purines biosynthetic pathway. Catalyzes the ATP-dependent conversion of formylglycinamide ribonucleotide (FGAR) and glutamine to yield formylglycinamidine ribonucleotide (FGAM) and glutamate. The FGAM synthase complex is composed of three subunits. PurQ produces an ammonia molecule by converting glutamine to glutamate. PurL transfers the ammonia molecule to FGAR to form FGAM in an ATP-dependent manner. PurS interacts with PurQ and PurL and is thought to assist in the transfer of the ammonia molecule from PurQ to PurL. The sequence is that of Phosphoribosylformylglycinamidine synthase subunit PurL from Staphylococcus aureus (strain USA300).